The primary structure comprises 238 residues: Ribosomal RNA small subunit methyltransferase G (238 aa).

Residues G106, L111, 157–158 (IE), and R170 each bind S-adenosyl-L-methionine.

This sequence belongs to the methyltransferase superfamily. RNA methyltransferase RsmG family.

The protein localises to the cytoplasm. The enzyme catalyses guanosine(527) in 16S rRNA + S-adenosyl-L-methionine = N(7)-methylguanosine(527) in 16S rRNA + S-adenosyl-L-homocysteine. Specifically methylates the N7 position of guanine in position 527 of 16S rRNA. In Psychrobacter arcticus (strain DSM 17307 / VKM B-2377 / 273-4), this protein is Ribosomal RNA small subunit methyltransferase G.